The primary structure comprises 165 residues: Chorismate pyruvate-lyase (165 aa).

Residues Met35, Arg77, Leu115, and Glu156 each contribute to the substrate site.

Belongs to the UbiC family. As to quaternary structure, monomer.

Its subcellular location is the cytoplasm. The catalysed reaction is chorismate = 4-hydroxybenzoate + pyruvate. The protein operates within cofactor biosynthesis; ubiquinone biosynthesis. Removes the pyruvyl group from chorismate, with concomitant aromatization of the ring, to provide 4-hydroxybenzoate (4HB) for the ubiquinone pathway. In Escherichia coli O127:H6 (strain E2348/69 / EPEC), this protein is Chorismate pyruvate-lyase.